We begin with the raw amino-acid sequence, 369 residues long: Nuclear pore complex-interacting protein family member A2 (369 aa).

The segment at 325 to 346 (KTPPECLLTPLPPSAPPSADDN) is disordered.

The protein belongs to the NPIP family.

The polypeptide is Nuclear pore complex-interacting protein family member A2 (NPIPA2) (Homo sapiens (Human)).